The sequence spans 821 residues: PX domain-containing protein C1450.12 (821 aa).

The region spanning 171 to 310 (AYVLGVRQST…SFLTDDPVTL (140 aa)) is the PX domain. The disordered stretch occupies residues 235–271 (KDDHDTYLNSSEDSTLSPLPSRSSDTNDPQSDSQHVL). The span at 241-268 (YLNSSEDSTLSPLPSRSSDTNDPQSDSQ) shows a compositional bias: polar residues. A phosphothreonine mark is found at threonine 260 and threonine 597. 2 stretches are compositionally biased toward acidic residues: residues 737–746 (GDEDDQDEND) and 754–766 (EHMEDDDSVEEFD). The tract at residues 737-766 (GDEDDQDENDQVTKVEEEHMEDDDSVEEFD) is disordered. The residue at position 761 (serine 761) is a Phosphoserine.

The protein localises to the mitochondrion membrane. This chain is PX domain-containing protein C1450.12, found in Schizosaccharomyces pombe (strain 972 / ATCC 24843) (Fission yeast).